The following is a 240-amino-acid chain: Triosephosphate isomerase (240 aa).

8-10 (NWK) contacts substrate. The Electrophile role is filled by His93. Residue Glu160 is the Proton acceptor of the active site. Gly166 lines the substrate pocket.

Belongs to the triosephosphate isomerase family. As to quaternary structure, homodimer.

It is found in the cytoplasm. It catalyses the reaction D-glyceraldehyde 3-phosphate = dihydroxyacetone phosphate. It functions in the pathway carbohydrate biosynthesis; gluconeogenesis. It participates in carbohydrate degradation; glycolysis; D-glyceraldehyde 3-phosphate from glycerone phosphate: step 1/1. Involved in the gluconeogenesis. Catalyzes stereospecifically the conversion of dihydroxyacetone phosphate (DHAP) to D-glyceraldehyde-3-phosphate (G3P). The protein is Triosephosphate isomerase of Ehrlichia chaffeensis (strain ATCC CRL-10679 / Arkansas).